The primary structure comprises 83 residues: MIIPWQELEAETLDNIVESVILREGTDYGIEELSLNQKKQLLLTQIRNGIALIVWSELHESIDIKNKTEFLKQECKEQECQMN.

This sequence belongs to the UPF0270 family.

This Haemophilus influenzae (strain PittEE) protein is UPF0270 protein CGSHiEE_07180.